The sequence spans 84 residues: Neurotoxin BmK-M11 (84 aa).

Positions 1–19 are cleaved as a signal peptide; the sequence is MNYLVMISFALLLMTGVES. An LCN-type CS-alpha/beta domain is found at 21 to 83; that stretch reads RDAYIAKPEN…VPIRVPGKCH (63 aa). Intrachain disulfides connect cysteine 31-cysteine 82, cysteine 35-cysteine 55, cysteine 41-cysteine 65, and cysteine 45-cysteine 67. A propeptide (removed by a carboxypeptidase) is located at residue arginine 84.

The protein belongs to the long (4 C-C) scorpion toxin superfamily. Sodium channel inhibitor family. Alpha subfamily. Expressed by the venom gland.

It is found in the secreted. Functionally, alpha toxins bind voltage-independently at site-3 of sodium channels (Nav) and inhibit the inactivation of the activated channels, thereby blocking neuronal transmission. This recombinant toxin selectively inhibits the fast inactivation of mNav1.4/SCN4A (EC(50)=82.3 nM) (tested in HEK293 cells). The polypeptide is Neurotoxin BmK-M11 (Olivierus martensii (Manchurian scorpion)).